The sequence spans 328 residues: 2-oxoglutarate-dependent dioxygenase gloF (328 aa).

Positions 175–289 constitute a Fe2OG dioxygenase domain; it reads DTSELRMNHY…RYSVAYFGKP (115 aa). Fe cation-binding residues include His201, Asp203, and His261. Residue Arg280 coordinates 2-oxoglutarate.

The protein belongs to the iron/ascorbate-dependent oxidoreductase family. It depends on Fe(2+) as a cofactor.

It participates in mycotoxin biosynthesis. Its function is as follows. 2-oxoglutarate-dependent dioxygenase; part of the gene cluster that mediates the biosynthesis of pneumocandins, lipohexapeptides of the echinocandin family that prevent fungal cell wall formation by non-competitive inhibition of beta-1,3-glucan synthase. The 10,12-dimethylmyristoyl side chain is synthesized by the reducing polyketide synthase gloL/GLPKS4. The thioesterase gloN/GLHYD exclusively interacts with gloL/GLPKS4 to maintain turnover of the polyketide side chain. The 10R,12S-dimethylmyristic acid is then transferred to the first thiolation domain of the nonribosomal peptide synthetase gloA/GLNRPS4 by the acyl-AMP ligase gloD/GLligase, followed by its acylation to L-ornithine to trigger elongation of the cyclic hexapeptide. L-ornithine, 4R-hydroxyl-L-proline (generated from L-proline by the dioxygenase gloF/GLOXY2), 3S-hydroxyl-L-homotyrosine (generated by gloG/GLHtyB, gloH/GLHtyA, gloI/GLHtyC, gloJ/GLHtyD and hydroxylated at C-3 by the dioxygenase gloM/GLOXY1), 3R-hydroxyl-L-glutamine (generated from L-glutamine probably by the dioxygenase gloE/GLOXY3) and 3S-hydroxyl-L-proline (generated from L-proline by the dioxygenase gloF/GLOXY2 to yield pneumocandin B0), or 3S-hydroxyl-4S-methyl-L-proline (generated from L-leucine by the dioxygenase gloC/GLOXY4 to yield pneumocandin A0) are sequentially added to the growing chain. The last C domain of gloA/GLNRPS4 is proposed to be responsible for cyclization by condensation to form the peptide bond between L-ornithine and 3S-hydroxyl-4S-methyl-L-proline (for pneumocandin A0) or 3S-hydroxyl-L-proline (for pneumocandin B0). Finally, the subsequent C-4 hydroxylation of 3S-hydroxyl-L-homotyrosine and L-ornithine dihydroxylation at C-4 and C-5 are performed by the cytochrome P450 monooxygenases gloP/GLP450-1 and gloO/GLP450-2, respectively. The protein is 2-oxoglutarate-dependent dioxygenase gloF of Glarea lozoyensis (strain ATCC 20868 / MF5171).